A 225-amino-acid chain; its full sequence is Octanoyltransferase (225 aa).

A BPL/LPL catalytic domain is found at 29–210 (PDTDDEIWVV…RLIAHLDGAT (182 aa)). Residues 69 to 76 (RGGQITYH), 141 to 143 (ALG), and 154 to 156 (GLS) each bind substrate. C172 serves as the catalytic Acyl-thioester intermediate.

It belongs to the LipB family.

Its subcellular location is the cytoplasm. The catalysed reaction is octanoyl-[ACP] + L-lysyl-[protein] = N(6)-octanoyl-L-lysyl-[protein] + holo-[ACP] + H(+). It functions in the pathway protein modification; protein lipoylation via endogenous pathway; protein N(6)-(lipoyl)lysine from octanoyl-[acyl-carrier-protein]: step 1/2. In terms of biological role, catalyzes the transfer of endogenously produced octanoic acid from octanoyl-acyl-carrier-protein onto the lipoyl domains of lipoate-dependent enzymes. Lipoyl-ACP can also act as a substrate although octanoyl-ACP is likely to be the physiological substrate. The polypeptide is Octanoyltransferase (Burkholderia pseudomallei (strain K96243)).